The sequence spans 418 residues: Serine hydroxymethyltransferase (418 aa).

Residues Leu-121 and 125-127 each bind (6S)-5,6,7,8-tetrahydrofolate; that span reads GHL. Lys-230 bears the N6-(pyridoxal phosphate)lysine mark. 356 to 358 contacts (6S)-5,6,7,8-tetrahydrofolate; it reads SPF.

The protein belongs to the SHMT family. Homodimer. Pyridoxal 5'-phosphate is required as a cofactor.

It is found in the cytoplasm. It catalyses the reaction (6R)-5,10-methylene-5,6,7,8-tetrahydrofolate + glycine + H2O = (6S)-5,6,7,8-tetrahydrofolate + L-serine. The protein operates within one-carbon metabolism; tetrahydrofolate interconversion. It participates in amino-acid biosynthesis; glycine biosynthesis; glycine from L-serine: step 1/1. Catalyzes the reversible interconversion of serine and glycine with tetrahydrofolate (THF) serving as the one-carbon carrier. This reaction serves as the major source of one-carbon groups required for the biosynthesis of purines, thymidylate, methionine, and other important biomolecules. Also exhibits THF-independent aldolase activity toward beta-hydroxyamino acids, producing glycine and aldehydes, via a retro-aldol mechanism. The protein is Serine hydroxymethyltransferase of Idiomarina loihiensis (strain ATCC BAA-735 / DSM 15497 / L2-TR).